The sequence spans 129 residues: uncharacterized protein (129 aa).

Disordered stretches follow at residues Met1 to His57 and Pro87 to Trp129. Over residues Ser10 to Gly20 the composition is skewed to basic and acidic residues. A compositionally biased stretch (low complexity) spans Pro87–Ser99.

This is an uncharacterized protein from Homo sapiens (Human).